We begin with the raw amino-acid sequence, 329 residues long: Malate dehydrogenase (329 aa).

13 to 19 (GAAGNIS) lines the NAD(+) pocket. 2 residues coordinate substrate: arginine 94 and arginine 100. Residues asparagine 107, glutamine 114, and 131–133 (VGN) each bind NAD(+). Residues asparagine 133 and arginine 164 each coordinate substrate. Histidine 189 serves as the catalytic Proton acceptor.

It belongs to the LDH/MDH superfamily. MDH type 2 family.

The enzyme catalyses (S)-malate + NAD(+) = oxaloacetate + NADH + H(+). Functionally, catalyzes the reversible oxidation of malate to oxaloacetate. The chain is Malate dehydrogenase from Psychrobacter arcticus (strain DSM 17307 / VKM B-2377 / 273-4).